The sequence spans 341 residues: Phosphate acyltransferase (341 aa).

The protein belongs to the PlsX family. In terms of assembly, homodimer. Probably interacts with PlsY.

It localises to the cytoplasm. It catalyses the reaction a fatty acyl-[ACP] + phosphate = an acyl phosphate + holo-[ACP]. It functions in the pathway lipid metabolism; phospholipid metabolism. Its function is as follows. Catalyzes the reversible formation of acyl-phosphate (acyl-PO(4)) from acyl-[acyl-carrier-protein] (acyl-ACP). This enzyme utilizes acyl-ACP as fatty acyl donor, but not acyl-CoA. This Photobacterium profundum (strain SS9) protein is Phosphate acyltransferase.